Here is a 255-residue protein sequence, read N- to C-terminus: Small ribosomal subunit protein uS2 (255 aa).

Residues 232 to 255 (ASGRDLGASEEVPVEPALEEASEA) form a disordered region.

It belongs to the universal ribosomal protein uS2 family.

The chain is Small ribosomal subunit protein uS2 from Sinorhizobium medicae (strain WSM419) (Ensifer medicae).